A 337-amino-acid polypeptide reads, in one-letter code: Phosphatidate cytidylyltransferase, mitochondrial (337 aa).

It belongs to the TAM41 family. Requires Mg(2+) as cofactor. In terms of tissue distribution, brain and liver.

Its subcellular location is the mitochondrion inner membrane. It catalyses the reaction a 1,2-diacyl-sn-glycero-3-phosphate + CTP + H(+) = a CDP-1,2-diacyl-sn-glycerol + diphosphate. It functions in the pathway phospholipid metabolism; CDP-diacylglycerol biosynthesis; CDP-diacylglycerol from sn-glycerol 3-phosphate: step 3/3. Catalyzes the conversion of phosphatidic acid (PA) to CDP-diacylglycerol (CDP-DAG), an essential intermediate in the synthesis of phosphatidylglycerol, cardiolipin and phosphatidylinositol. The chain is Phosphatidate cytidylyltransferase, mitochondrial (Tamm41) from Rattus norvegicus (Rat).